A 262-amino-acid chain; its full sequence is GTP cyclohydrolase FolE2 (262 aa).

It belongs to the GTP cyclohydrolase IV family.

It catalyses the reaction GTP + H2O = 7,8-dihydroneopterin 3'-triphosphate + formate + H(+). The protein operates within cofactor biosynthesis; 7,8-dihydroneopterin triphosphate biosynthesis; 7,8-dihydroneopterin triphosphate from GTP: step 1/1. Its function is as follows. Converts GTP to 7,8-dihydroneopterin triphosphate. The chain is GTP cyclohydrolase FolE2 from Dichelobacter nodosus (strain VCS1703A).